Consider the following 360-residue polypeptide: COP9 signalosome complex subunit 5 (360 aa).

The 138-residue stretch at 60–197 (AKISALALLK…IGAFRTYPKD (138 aa)) folds into the MPN domain. Zn(2+) is bound by residues H143, H145, and D156. The JAMM motif motif lies at 143-156 (HSHPGYGCWLSGID). 2 disordered regions span residues 293–315 (LMPS…RDSS) and 341–360 (SNKA…MVEA). Polar residues predominate over residues 341-350 (SNKASTSAPD).

The protein belongs to the peptidase M67A family. CSN5 subfamily. As to quaternary structure, component of the CSN complex, probably composed of CSN1, CSN2, CSN3, CSN4, CSN5, CSN6, CSN7 and CSN8. Interacts with MCM2.

Probable protease subunit of the COP9 signalosome complex (CSN), a complex involved in various cellular and developmental processes such as photomorphogenesis and response to hormones. The CSN complex is an essential regulator of the ubiquitin (Ubl) conjugation pathway by mediating the deneddylation of the cullin subunits of SCF-type E3 ligase complexes, leading to decrease the Ubl ligase activity of SCF. Involved in early response to iron deficiency. This Oryza sativa subsp. japonica (Rice) protein is COP9 signalosome complex subunit 5.